The sequence spans 132 residues: Iron-sulfur cluster assembly 1 homolog, mitochondrial (132 aa).

The transit peptide at 1 to 15 (MASSASSVVRATVRA) directs the protein to the mitochondrion. Fe cation is bound by residues cysteine 60, cysteine 124, and cysteine 126.

This sequence belongs to the HesB/IscA family. As to quaternary structure, homooligomer, forming a rod-shaped structure 24 nm in length that may arise through a double-helical assembly of subunits. Interacts with CRY4; CRY4 seems to be associated with the outside of the rod-shaped homooligomer. Does not interact with CRY1 or CRY2. Detected in retina, especially in the retinal ganglion layer, the inner nuclear layer and the outer nuclear layer. Detected in retina visual pigment cells (at protein level).

It localises to the mitochondrion. Involved in the maturation of mitochondrial 4Fe-4S proteins functioning late in the iron-sulfur cluster assembly pathway. Probably involved in the binding of an intermediate of Fe/S cluster assembly. Component of a putative magnetoreceptor complex formed by ISCA1 and CRY4, a member of the cryptochrome family that are known to be required for light-dependent magnetosensitivity in various orgnisms. The rod-like assembly may facilitate the perception of the Earth's weak magnetic field. Both ISCA1 and the complex with CRY4 have magnetic properties and are attracted to iron beads. When exposed to a magnetic field of 1 mT (superior to the natural magnetic field), over 50% of the rod-like complexes align more or less in parallel with the magnetic field at room temperature. The sequence is that of Iron-sulfur cluster assembly 1 homolog, mitochondrial (ISCA1) from Columba livia (Rock dove).